Reading from the N-terminus, the 446-residue chain is Methylenetetrahydrofolate--tRNA-(uracil-5-)-methyltransferase TrmFO (446 aa).

9–14 (GGGMAG) provides a ligand contact to FAD.

The protein belongs to the MnmG family. TrmFO subfamily. The cofactor is FAD.

The protein localises to the cytoplasm. It catalyses the reaction uridine(54) in tRNA + (6R)-5,10-methylene-5,6,7,8-tetrahydrofolate + NADH + H(+) = 5-methyluridine(54) in tRNA + (6S)-5,6,7,8-tetrahydrofolate + NAD(+). The enzyme catalyses uridine(54) in tRNA + (6R)-5,10-methylene-5,6,7,8-tetrahydrofolate + NADPH + H(+) = 5-methyluridine(54) in tRNA + (6S)-5,6,7,8-tetrahydrofolate + NADP(+). In terms of biological role, catalyzes the folate-dependent formation of 5-methyl-uridine at position 54 (M-5-U54) in all tRNAs. The polypeptide is Methylenetetrahydrofolate--tRNA-(uracil-5-)-methyltransferase TrmFO (Ruegeria sp. (strain TM1040) (Silicibacter sp.)).